Reading from the N-terminus, the 217-residue chain is Yop proteins translocation protein R (217 aa).

Helical transmembrane passes span 11 to 31 (IIVL…TSFV), 53 to 73 (MAMY…VGFA), 157 to 177 (IGFL…NILL), and 181 to 201 (MMMV…FVLL).

It belongs to the FliP/MopC/SpaP family.

It is found in the cell membrane. Its function is as follows. Component of the yop secretion machinery. May have a role in the negative pathway regulation of yop expression controlled by calcium. The protein is Yop proteins translocation protein R (yscR) of Yersinia pestis.